We begin with the raw amino-acid sequence, 244 residues long: Type III pantothenate kinase (244 aa).

Position 7–14 (7–14 (DIGNTRLK)) interacts with ATP. Substrate-binding positions include Y95 and 102–105 (GIDR). Catalysis depends on D104, which acts as the Proton acceptor. T126 is a binding site for ATP. A substrate-binding site is contributed by T177.

The protein belongs to the type III pantothenate kinase family. As to quaternary structure, homodimer. NH4(+) is required as a cofactor. The cofactor is K(+).

It localises to the cytoplasm. It catalyses the reaction (R)-pantothenate + ATP = (R)-4'-phosphopantothenate + ADP + H(+). It participates in cofactor biosynthesis; coenzyme A biosynthesis; CoA from (R)-pantothenate: step 1/5. Catalyzes the phosphorylation of pantothenate (Pan), the first step in CoA biosynthesis. This chain is Type III pantothenate kinase, found in Acinetobacter baumannii (strain ACICU).